Consider the following 196-residue polypeptide: Proteasome subunit beta 1 (196 aa).

Positions 1–6 are cleaved as a propeptide — removed in mature form; by autocatalysis; it reads MEELPA. Threonine 7 functions as the Nucleophile in the catalytic mechanism.

It belongs to the peptidase T1B family. The 20S proteasome core is composed of 14 alpha and 14 beta subunits that assemble into four stacked heptameric rings, resulting in a barrel-shaped structure. The two inner rings, each composed of seven catalytic beta subunits, are sandwiched by two outer rings, each composed of seven alpha subunits. The catalytic chamber with the active sites is on the inside of the barrel. Has a gated structure, the ends of the cylinder being occluded by the N-termini of the alpha-subunits. Is capped at one or both ends by the proteasome regulatory ATPase, PAN.

The protein resides in the cytoplasm. The catalysed reaction is Cleavage of peptide bonds with very broad specificity.. With respect to regulation, the formation of the proteasomal ATPase PAN-20S proteasome complex, via the docking of the C-termini of PAN into the intersubunit pockets in the alpha-rings, triggers opening of the gate for substrate entry. Interconversion between the open-gate and close-gate conformations leads to a dynamic regulation of the 20S proteasome proteolysis activity. In terms of biological role, component of the proteasome core, a large protease complex with broad specificity involved in protein degradation. The protein is Proteasome subunit beta 1 of Saccharolobus solfataricus (strain ATCC 35092 / DSM 1617 / JCM 11322 / P2) (Sulfolobus solfataricus).